The sequence spans 185 residues: Threonylcarbamoyl-AMP synthase (185 aa).

The 185-residue stretch at 1-185 (MKNLNQVVDA…AKTGNTLRQG (185 aa)) folds into the YrdC-like domain.

Belongs to the SUA5 family. TsaC subfamily.

It localises to the cytoplasm. The catalysed reaction is L-threonine + hydrogencarbonate + ATP = L-threonylcarbamoyladenylate + diphosphate + H2O. Required for the formation of a threonylcarbamoyl group on adenosine at position 37 (t(6)A37) in tRNAs that read codons beginning with adenine. Catalyzes the conversion of L-threonine, HCO(3)(-)/CO(2) and ATP to give threonylcarbamoyl-AMP (TC-AMP) as the acyladenylate intermediate, with the release of diphosphate. The chain is Threonylcarbamoyl-AMP synthase from Aliivibrio fischeri (strain ATCC 700601 / ES114) (Vibrio fischeri).